The following is a 307-amino-acid chain: 4-hydroxy-3-methylbut-2-enyl diphosphate reductase (307 aa).

Cys13 contacts [4Fe-4S] cluster. His42 and His75 together coordinate (2E)-4-hydroxy-3-methylbut-2-enyl diphosphate. Dimethylallyl diphosphate-binding residues include His42 and His75. Positions 42 and 75 each coordinate isopentenyl diphosphate. A [4Fe-4S] cluster-binding site is contributed by Cys97. His125 contacts (2E)-4-hydroxy-3-methylbut-2-enyl diphosphate. His125 lines the dimethylallyl diphosphate pocket. His125 serves as a coordination point for isopentenyl diphosphate. Glu127 (proton donor) is an active-site residue. (2E)-4-hydroxy-3-methylbut-2-enyl diphosphate is bound at residue Thr165. Cys195 is a binding site for [4Fe-4S] cluster. (2E)-4-hydroxy-3-methylbut-2-enyl diphosphate contacts are provided by Ser223, Ser224, Asn225, and Ser267. Dimethylallyl diphosphate is bound by residues Ser223, Ser224, Asn225, and Ser267. 4 residues coordinate isopentenyl diphosphate: Ser223, Ser224, Asn225, and Ser267.

It belongs to the IspH family. Requires [4Fe-4S] cluster as cofactor.

It carries out the reaction isopentenyl diphosphate + 2 oxidized [2Fe-2S]-[ferredoxin] + H2O = (2E)-4-hydroxy-3-methylbut-2-enyl diphosphate + 2 reduced [2Fe-2S]-[ferredoxin] + 2 H(+). The enzyme catalyses dimethylallyl diphosphate + 2 oxidized [2Fe-2S]-[ferredoxin] + H2O = (2E)-4-hydroxy-3-methylbut-2-enyl diphosphate + 2 reduced [2Fe-2S]-[ferredoxin] + 2 H(+). Its pathway is isoprenoid biosynthesis; dimethylallyl diphosphate biosynthesis; dimethylallyl diphosphate from (2E)-4-hydroxy-3-methylbutenyl diphosphate: step 1/1. The protein operates within isoprenoid biosynthesis; isopentenyl diphosphate biosynthesis via DXP pathway; isopentenyl diphosphate from 1-deoxy-D-xylulose 5-phosphate: step 6/6. Its function is as follows. Catalyzes the conversion of 1-hydroxy-2-methyl-2-(E)-butenyl 4-diphosphate (HMBPP) into a mixture of isopentenyl diphosphate (IPP) and dimethylallyl diphosphate (DMAPP). Acts in the terminal step of the DOXP/MEP pathway for isoprenoid precursor biosynthesis. This is 4-hydroxy-3-methylbut-2-enyl diphosphate reductase from Chlamydia trachomatis serovar L2b (strain UCH-1/proctitis).